A 152-amino-acid polypeptide reads, in one-letter code: MDKTDVKLLKLVQDGIPITHSPFKGFASELGISEQEVVDRLKNLQKAGKIRRFAASIGHRAIGITANAMCVWNVPDEQIETVGNIMAEFPEVTHCYERPRYPDWPYNLFTMVHSYTPEDCEKVAVRISEATGIRDYTLFFSEREFKKTGVRL.

The protein belongs to the Ahb/Nir family. As to quaternary structure, forms a heterodimer composed of AhbA and AhbB.

It catalyses the reaction siroheme + 2 H(+) = 12,18-didecarboxysiroheme + 2 CO2. It functions in the pathway porphyrin-containing compound metabolism; protoheme biosynthesis. Binds heme b. The redox state of the heme b modulates the activity of the enzyme. Activity is stimulated by sodium dithionite. Involved in siroheme-dependent heme b biosynthesis. Catalyzes the decarboxylation of siroheme into didecarboxysiroheme. The chain is Siroheme decarboxylase beta subunit from Methanosarcina barkeri (strain Fusaro / DSM 804).